The primary structure comprises 1519 residues: Rho guanine nucleotide exchange factor 40 (1519 aa).

Disordered stretches follow at residues 194–237 (VGHQ…PVEG) and 253–503 (RGSP…LETV). The segment covering 200-218 (TLPPELPSGPPGLPSPPLP) has biased composition (pro residues). Serine 262 carries the post-translational modification Phosphoserine. A compositionally biased stretch (basic residues) spans 280–290 (KGRHRRHRAWM). Residues 314 to 341 (ASPESPPGAEAVPEAAVLEVSEPPAEAV) show a composition bias toward low complexity. The span at 355 to 367 (LRGGGGGGQGAEG) shows a compositional bias: gly residues. Threonine 371 bears the Phosphothreonine mark. Residues 374–386 (RTGKGNRRKKRAA) show a composition bias toward basic residues. A Phosphoserine modification is found at serine 419. Positions 421-457 (SEHKLPECHLVKEEYEGSGKPESEPKELKTAGEKEPQ) are enriched in basic and acidic residues. Positions 828–871 (SAEVQERLAQAREALALEENATSQKVLDIFEQRLEQVESGLHRA) form a coiled coil. A phosphoserine mark is found at serine 931 and serine 961. Positions 934–961 (ALREWGRCQARCQELERRIQQHVGEEAS) form a coiled coil. The segment at 955 to 1031 (HVGEEASPRG…ELAPEAEGRP (77 aa)) is disordered. The span at 980 to 996 (WGPRSPSPSLSSLLLPS) shows a compositional bias: low complexity. Serine 1082 bears the Phosphoserine mark. In terms of domain architecture, DH spans 1085–1253 (AQQRLVSELI…REQEARGRDL (169 aa)). Residues 1265-1372 (DLKEQGQLLH…WTSSIAQLLW (108 aa)) form the PH domain. Serine 1433, serine 1438, and serine 1474 each carry phosphoserine. Residues 1466–1519 (TLDSSGDVSPGPRNSPSLQPPHPGSSTPTLASRGILGLSRQSHARALSDPTTPL) form a disordered region. Polar residues predominate over residues 1467–1482 (LDSSGDVSPGPRNSPS). A Phosphothreonine modification is found at threonine 1492.

In terms of tissue distribution, expressed at higher level in the central nervous system and skeletal muscle and greater abundance in fetal than adult brain (at protein level).

The protein localises to the cytoplasm. Its function is as follows. May act as a guanine nucleotide exchange factor (GEF). This is Rho guanine nucleotide exchange factor 40 (ARHGEF40) from Homo sapiens (Human).